The chain runs to 425 residues: Histidine--tRNA ligase (425 aa).

It belongs to the class-II aminoacyl-tRNA synthetase family. As to quaternary structure, homodimer.

Its subcellular location is the cytoplasm. The enzyme catalyses tRNA(His) + L-histidine + ATP = L-histidyl-tRNA(His) + AMP + diphosphate + H(+). This is Histidine--tRNA ligase from Desulforapulum autotrophicum (strain ATCC 43914 / DSM 3382 / VKM B-1955 / HRM2) (Desulfobacterium autotrophicum).